A 342-amino-acid polypeptide reads, in one-letter code: MLFWGTPSYAVPTLDALNDSGYEIVGVVSQPDRRRGRGNQQMASPVKQRAMDQGLRVFTPERIRDEGNVQAELKSLKADISVVVAFGQLLPSTVLNQPPLGCWNGHASLLPRWRGAGPIQWSLLSGDSVTGVGIMAMEEGLDTGPVLANQRVSIGLLENANQLSNRLSSITAKLFLESIPRIAAAGPGVESERWKQLEVIKQEEIGGDPTYARMLSKKDHILDWNQSAMDLHRRVMGLYPNAFSSWNNKRLKVQATEPLDEELKSKLSERVRPLLGRWQDGEHEPGKILACESDLGLVVSTKTCPLLIRQGQLEGKSKALGEVLIQQLQATVGQNLGVVCNI.

108 to 111 is a (6S)-5,6,7,8-tetrahydrofolate binding site; that stretch reads SLLP.

This sequence belongs to the Fmt family.

It carries out the reaction L-methionyl-tRNA(fMet) + (6R)-10-formyltetrahydrofolate = N-formyl-L-methionyl-tRNA(fMet) + (6S)-5,6,7,8-tetrahydrofolate + H(+). Its function is as follows. Attaches a formyl group to the free amino group of methionyl-tRNA(fMet). The formyl group appears to play a dual role in the initiator identity of N-formylmethionyl-tRNA by promoting its recognition by IF2 and preventing the misappropriation of this tRNA by the elongation apparatus. The polypeptide is Methionyl-tRNA formyltransferase (Prochlorococcus marinus (strain MIT 9303)).